The following is a 234-amino-acid chain: MNYSLEDLPNSGKNPRVYMDIVLNNEIIGRLQIKLFRDAFPAGVENFVQLTNGKTYRVNSNGTGKYKYNRHINRTYEGCKFHNVLHNNYIVSGDIYNSNGSSAGTVYCDEPIPPVFGDYFYPHESKGLLSLVPYTDESGNRYYDSTFMITLDDIRPSNVLDELDRDQVVIGQVYGGLDVLDKINSMIKPYAGRKYPTFSIGKCGAYLDSSQAQRKRPVNVNGTKRFLNKPTRVN.

A PPIase cyclophilin-type domain is found at 18–205; the sequence is YMDIVLNNEI…PTFSIGKCGA (188 aa).

It belongs to the cyclophilin-type PPIase family. Homotrimer.

It is found in the virion. The protein resides in the host cytoplasm. The chain is Structural PPIase-like protein L605 from Acanthamoeba polyphaga mimivirus (APMV).